A 136-amino-acid polypeptide reads, in one-letter code: Ubiquinol-cytochrome c reductase complex assembly factor 4 (136 aa).

The first 15 residues, 1–15 (MNSVLCSRAAGAVRA), serve as a signal peptide directing secretion. The Mitochondrial matrix portion of the chain corresponds to 16–80 (LRLVGWASRS…GKPQQRPWWK (65 aa)). The tract at residues 26-58 (LHPPPRGRSPAQPADREEEDDDPNLPIQFSGSK) is disordered. A helical membrane pass occupies residues 81 to 97 (VLPLTLTLVALVVWCYQ). Over 98–136 (REESGMDLWLRQVLEEEDEEEPEGPPEELEAPALYGART) the chain is Mitochondrial intermembrane. Residues 112 to 127 (EEEDEEEPEGPPEELE) are compositionally biased toward acidic residues. Residues 112–136 (EEEDEEEPEGPPEELEAPALYGART) form a disordered region.

This sequence belongs to the UQCC4 family. Forms a complex, named COMB/coordinator of mitochondrial CYTB biogenesis, composed of UQCC1, UQCC2, UQCC4, UQCC5 and UQCC6; stabilizes nascent cytochrome b/MT-CYB and promotes its membrane insertion. Forms a complex, named COMA, composed of UQCC1, UQCC2 and UQCC4; activates MT-CYB translation. Forms a complex, named COMC, composed of UQCC1, UQCC2; UQCC3 and UQCC4; mediates MT-CYB hemylation and association with the first nuclear-encoded complex III subunit UQCRQ. Complexes COMA and COMB are bound to the mitochondrion inner membrane by UQCC4.

It localises to the mitochondrion inner membrane. Its function is as follows. Required for the assembly and stability of the mitochondrial ubiquinol-cytochrome c reductase complex (complex III (CIII) or cytochrome b-c1 complex), a multisubunit transmembrane complex that is part of the mitochondrial electron transport chain (ETC) which drives oxidative phosphorylation. In Mus musculus (Mouse), this protein is Ubiquinol-cytochrome c reductase complex assembly factor 4 (Uqcc4).